The chain runs to 350 residues: Quinolinate phosphoribosyltransferase [decarboxylating] 1 (350 aa).

Substrate is bound by residues R141, 172-174 (TRK), R196, K206, E239, D266, 298-300 (SGN), and 319-321 (SGA).

Belongs to the NadC/ModD family.

It carries out the reaction nicotinate beta-D-ribonucleotide + CO2 + diphosphate = quinolinate + 5-phospho-alpha-D-ribose 1-diphosphate + 2 H(+). It participates in alkaloid biosynthesis; nicotine biosynthesis. The protein operates within cofactor biosynthesis; NAD(+) biosynthesis; nicotinate D-ribonucleotide from quinolinate: step 1/1. Functionally, involved in the biosynthesis of pyridine alkaloid natural products, leading mainly to the production of anabasine, anatabine, nicotine and nornicotine, effective deterrents against herbivores with antiparasitic and pesticide properties (neurotoxins); nornicotine serves as the precursor in the synthesis of the carcinogen compound N'-nitrosonornicotine (NNN). Involved in the catabolism of quinolinic acid (QA). In Nicotiana glauca (Glaucous tobacco), this protein is Quinolinate phosphoribosyltransferase [decarboxylating] 1.